Consider the following 157-residue polypeptide: SsrA-binding protein (157 aa).

The tract at residues 133 to 157 is disordered; that stretch reads LHDKRESEKKRDWGREKGRLLRARG. Residues 135 to 151 show a composition bias toward basic and acidic residues; it reads DKRESEKKRDWGREKGR.

It belongs to the SmpB family.

It localises to the cytoplasm. Functionally, required for rescue of stalled ribosomes mediated by trans-translation. Binds to transfer-messenger RNA (tmRNA), required for stable association of tmRNA with ribosomes. tmRNA and SmpB together mimic tRNA shape, replacing the anticodon stem-loop with SmpB. tmRNA is encoded by the ssrA gene; the 2 termini fold to resemble tRNA(Ala) and it encodes a 'tag peptide', a short internal open reading frame. During trans-translation Ala-aminoacylated tmRNA acts like a tRNA, entering the A-site of stalled ribosomes, displacing the stalled mRNA. The ribosome then switches to translate the ORF on the tmRNA; the nascent peptide is terminated with the 'tag peptide' encoded by the tmRNA and targeted for degradation. The ribosome is freed to recommence translation, which seems to be the essential function of trans-translation. In Bradyrhizobium sp. (strain BTAi1 / ATCC BAA-1182), this protein is SsrA-binding protein.